The chain runs to 202 residues: Large ribosomal subunit protein bL9 (202 aa).

The segment at 176 to 202 (AAGEFFDPDAQHDDEPAAEDDQNAEEK) is disordered. A compositionally biased stretch (acidic residues) spans 191–202 (PAAEDDQNAEEK).

The protein belongs to the bacterial ribosomal protein bL9 family.

In terms of biological role, binds to the 23S rRNA. This Nitrobacter winogradskyi (strain ATCC 25391 / DSM 10237 / CIP 104748 / NCIMB 11846 / Nb-255) protein is Large ribosomal subunit protein bL9.